The primary structure comprises 360 residues: Protein RecA (360 aa).

Gly-77–Thr-84 provides a ligand contact to ATP.

The protein belongs to the RecA family.

The protein localises to the cytoplasm. In terms of biological role, can catalyze the hydrolysis of ATP in the presence of single-stranded DNA, the ATP-dependent uptake of single-stranded DNA by duplex DNA, and the ATP-dependent hybridization of homologous single-stranded DNAs. It interacts with LexA causing its activation and leading to its autocatalytic cleavage. This Chelativorans sp. (strain BNC1) protein is Protein RecA.